Here is a 449-residue protein sequence, read N- to C-terminus: Bifunctional protein GlmU (449 aa).

A pyrophosphorylase region spans residues 1–225 (MLSVAILAAG…NGELQGINNR (225 aa)). Residues 7–10 (LAAG), K21, Q73, and 78–79 (GT) each bind UDP-N-acetyl-alpha-D-glucosamine. A Mg(2+)-binding site is contributed by D103. Positions 140, 154, 169, and 223 each coordinate UDP-N-acetyl-alpha-D-glucosamine. Position 223 (N223) interacts with Mg(2+). Residues 226 to 246 (IHLSECEECIQNSIKEKHMLN) are linker. The interval 247–449 (GVTFINKASC…NIENWKKKKS (203 aa)) is N-acetyltransferase. UDP-N-acetyl-alpha-D-glucosamine contacts are provided by R328 and K346. The Proton acceptor role is filled by H358. The UDP-N-acetyl-alpha-D-glucosamine site is built by Y361 and N372. Acetyl-CoA contacts are provided by A375, A418, and R435.

In the N-terminal section; belongs to the N-acetylglucosamine-1-phosphate uridyltransferase family. This sequence in the C-terminal section; belongs to the transferase hexapeptide repeat family. As to quaternary structure, homotrimer. Mg(2+) is required as a cofactor.

The protein localises to the cytoplasm. The catalysed reaction is alpha-D-glucosamine 1-phosphate + acetyl-CoA = N-acetyl-alpha-D-glucosamine 1-phosphate + CoA + H(+). It carries out the reaction N-acetyl-alpha-D-glucosamine 1-phosphate + UTP + H(+) = UDP-N-acetyl-alpha-D-glucosamine + diphosphate. The protein operates within nucleotide-sugar biosynthesis; UDP-N-acetyl-alpha-D-glucosamine biosynthesis; N-acetyl-alpha-D-glucosamine 1-phosphate from alpha-D-glucosamine 6-phosphate (route II): step 2/2. It functions in the pathway nucleotide-sugar biosynthesis; UDP-N-acetyl-alpha-D-glucosamine biosynthesis; UDP-N-acetyl-alpha-D-glucosamine from N-acetyl-alpha-D-glucosamine 1-phosphate: step 1/1. Its pathway is bacterial outer membrane biogenesis; LPS lipid A biosynthesis. Its function is as follows. Catalyzes the last two sequential reactions in the de novo biosynthetic pathway for UDP-N-acetylglucosamine (UDP-GlcNAc). The C-terminal domain catalyzes the transfer of acetyl group from acetyl coenzyme A to glucosamine-1-phosphate (GlcN-1-P) to produce N-acetylglucosamine-1-phosphate (GlcNAc-1-P), which is converted into UDP-GlcNAc by the transfer of uridine 5-monophosphate (from uridine 5-triphosphate), a reaction catalyzed by the N-terminal domain. The sequence is that of Bifunctional protein GlmU from Prochlorococcus marinus (strain AS9601).